Consider the following 580-residue polypeptide: Mitogen-activated protein kinase 12 (580 aa).

Positions 18-38 (RTASGSNQSSNAGEEAASSDL) are disordered. A compositionally biased stretch (polar residues) spans 20–29 (ASGSNQSSNA). The 292-residue stretch at 87-378 (YQIQEVIGKG…AEEALADPYF (292 aa)) folds into the Protein kinase domain. Residues 93 to 101 (IGKGSYGVV) and Lys116 each bind ATP. Asp213 acts as the Proton acceptor in catalysis. The residue at position 249 (Thr249) is a Phosphothreonine. Residues 249 to 251 (TDY) carry the TXY motif. Tyr251 carries the post-translational modification Phosphotyrosine. The tract at residues 325–506 (ARRYLSTMRK…SADSVARTTV (182 aa)) is required for kinase activity and nuclear localization. Positions 458–580 (YSKGERGSPL…LSEQVSRMHS (123 aa)) are disordered. Positions 502-543 (ARTTVSPPMSQDAQQHGSAGQNGVTSTDLSSRSYLKSASISA) are enriched in polar residues. Residues 554-566 (EPEDDYISEEMEG) are compositionally biased toward acidic residues.

Belongs to the protein kinase superfamily. CMGC Ser/Thr protein kinase family. MAP kinase subfamily. As to quaternary structure, interacts with EREBP1. In terms of processing, dually phosphorylated on Thr-249 and Tyr-251, which activates the enzyme. Phosphorylated on tyrosine residue.

Its subcellular location is the cytoplasm. The protein localises to the nucleus. It carries out the reaction L-seryl-[protein] + ATP = O-phospho-L-seryl-[protein] + ADP + H(+). It catalyses the reaction L-threonyl-[protein] + ATP = O-phospho-L-threonyl-[protein] + ADP + H(+). Its activity is regulated as follows. Activated by threonine and tyrosine phosphorylation. Activated in response to hydrogen peroxide, salicylic acid, jasmonic acid, ethylene, fungal elicitor and infection with rice blast fungus (M.grisea). May be involved in defense signaling pathway. Phosphorylates EREBP1 transcriptional activator in vitro. Enhances DNA-binding activity of EREBP1 to the GCC box element of pathogenesis-related (PR) gene promoters. The chain is Mitogen-activated protein kinase 12 (MPK12) from Oryza sativa subsp. japonica (Rice).